A 131-amino-acid chain; its full sequence is Fatty acid-binding protein (131 aa).

(5Z,8Z,11Z,14Z)-eicosatetraenoate is bound by residues R106 and 126-128 (RPY). Residues R106 and 126 to 128 (RPY) each bind (9Z)-octadecenoate.

The protein belongs to the calycin superfamily. Fatty-acid binding protein (FABP) family.

It localises to the cytoplasm. FABPs are thought to play a role in the intracellular transport of long-chain fatty acids and their acyl-CoA esters. The sequence is that of Fatty acid-binding protein from Lepidoglyphus destructor (Storage mite).